Consider the following 776-residue polypeptide: A-type ATP synthase subunit A (776 aa).

The protein belongs to the ATPase alpha/beta chains family. As to quaternary structure, has multiple subunits with at least A(3), B(3), C, D, E, F, H, I and proteolipid K(x). In terms of processing, this protein undergoes a protein self splicing that involves a post-translational excision of the VDE intervening region (intein) followed by peptide ligation.

The protein resides in the cell membrane. It catalyses the reaction ATP + H2O + 4 H(+)(in) = ADP + phosphate + 5 H(+)(out). Functionally, component of the A-type ATP synthase that produces ATP from ADP in the presence of a proton gradient across the membrane. The A chain is the catalytic subunit. The protein is A-type ATP synthase subunit A of Thermoplasma volcanium (strain ATCC 51530 / DSM 4299 / JCM 9571 / NBRC 15438 / GSS1).